A 150-amino-acid chain; its full sequence is uncharacterized protein (150 aa).

A helical membrane pass occupies residues 19–39 (SLGMCVILIDGLIVLTAAFVF).

The protein to B.subtilis YpjC, YqfU and YitT.

It localises to the cell membrane. This is an uncharacterized protein from Bacillus sp. (strain PS3).